We begin with the raw amino-acid sequence, 321 residues long: G-protein coupled receptor homolog ECRF3 (321 aa).

Over 1 to 34 the chain is Extracellular; that stretch reads MEVKLDFSSEDFSNYSYNYSGDIYYGDVAPCVVN. Asparagine 14 and asparagine 18 each carry an N-linked (GlcNAc...) asparagine; by host glycan. Residues 35-51 form a helical membrane-spanning segment; sequence FLISESALAFIYVLMFL. Over 52–76 the chain is Cytoplasmic; that stretch reads CNAIGNSLVLRTFLKYRAQAQSFDY. The helical transmembrane segment at 77-93 threads the bilayer; that stretch reads LMMGFCLNSLFLAGYLL. Topologically, residues 94–124 are extracellular; it reads MRLLRMFEIFMNTELCKLEAFFLNLSIYWSP. N-linked (GlcNAc...) asparagine; by host glycosylation is present at asparagine 117. Residues 125-141 form a helical membrane-spanning segment; that stretch reads FILVFISVLRCLLIFCA. At 142-149 the chain is on the cytoplasmic side; that stretch reads TRLWVKKT. Residues 150–166 form a helical membrane-spanning segment; the sequence is LIGQVFLCCSFVLACFG. The Extracellular portion of the chain corresponds to 167–196; sequence ALPHVMVTSYYEPSSCIEEDGVLTEQLRTK. Residues 197–215 traverse the membrane as a helical segment; sequence LNTFHTWYSFAGPLFITVI. The Cytoplasmic portion of the chain corresponds to 216 to 234; the sequence is CYSMSCYKLFKTKLSKRAE. A helical transmembrane segment spans residues 235 to 251; it reads VVTIITMTTLLFIVFCI. The Extracellular portion of the chain corresponds to 252 to 286; sequence PYYIMESIDTLLRVGVIEETCAKRSAIVYGIQCTY. A helical membrane pass occupies residues 287-303; sequence MLLVLYYCMLPLMFAMF. At 304 to 321 the chain is on the cytoplasmic side; that stretch reads GSLFRQRMAAWCKTICHC.

This sequence belongs to the G-protein coupled receptor 1 family.

It localises to the host cell membrane. May be highly relevant to the process of cellular transformation and rapid T-cell proliferation effected by HVS during latent infections of T-cells in susceptible hosts. This Saimiri sciureus (Common squirrel monkey) protein is G-protein coupled receptor homolog ECRF3 (74).